The sequence spans 87 residues: MVNMKASMFLTFAGLVLLFVVCYASESEEKEFPKEMLSSIFAVDNDFKQEERDCAGYMRECKEKLCCSGYVCSSRWKWCVSPAPWRR.

The signal sequence occupies residues 1–24 (MVNMKASMFLTFAGLVLLFVVCYA). The propeptide occupies 25-52 (SESEEKEFPKEMLSSIFAVDNDFKQEER). 3 disulfide bridges follow: Cys54–Cys67, Cys61–Cys72, and Cys66–Cys79.

The protein belongs to the neurotoxin 10 (Hwtx-1) family. 51 (Hntx-8) subfamily. Hntx-8 sub-subfamily. In terms of tissue distribution, expressed by the venom gland.

It localises to the secreted. Functionally, ion channel inhibitor. The protein is U3-theraphotoxin-Hhn1j of Cyriopagopus hainanus (Chinese bird spider).